Here is a 354-residue protein sequence, read N- to C-terminus: Uroporphyrinogen decarboxylase (354 aa).

Substrate contacts are provided by residues 35–39, Asp84, Tyr159, Ser214, and His333; that span reads RQAGR.

The protein belongs to the uroporphyrinogen decarboxylase family. In terms of assembly, homodimer.

The protein resides in the cytoplasm. The catalysed reaction is uroporphyrinogen III + 4 H(+) = coproporphyrinogen III + 4 CO2. It functions in the pathway porphyrin-containing compound metabolism; protoporphyrin-IX biosynthesis; coproporphyrinogen-III from 5-aminolevulinate: step 4/4. Its function is as follows. Catalyzes the decarboxylation of four acetate groups of uroporphyrinogen-III to yield coproporphyrinogen-III. This is Uroporphyrinogen decarboxylase from Nocardia farcinica (strain IFM 10152).